Reading from the N-terminus, the 249-residue chain is Chromosome segregation and cytokinesis defective protein 1 (249 aa).

Residues 12-48 adopt a coiled-coil conformation; sequence VVAMADTLETRVKDLLEEYKKKLREVALQTAKAESDR. Disordered stretches follow at residues 70–89, 94–183, and 208–249; these read PDDF…AAVA, LPSE…PEKP, and TTAT…GTSV. Acidic residues predominate over residues 73-85; sequence FYIESGEEEEEGE. The span at 109 to 126 shows a compositional bias: polar residues; that stretch reads QKTSIPIGQNSGRNTVQV. Residues 224–236 show a composition bias toward low complexity; the sequence is SGAASKKAAAAAG.

The protein belongs to the borealin family. Highly divergent. Component of the CPC complex which consists of icp-1; csc-1; bir-1 and air-2. Within the complex interacts with Aurora B/air-2, bir-1 and icp-1.

Its subcellular location is the nucleus. It is found in the chromosome. It localises to the centromere. The protein localises to the cytoplasm. The protein resides in the cytoskeleton. Its subcellular location is the spindle. Component of the chromosomal passenger complex (CPC), a complex that acts as a key regulator of chromosome segregation and cytokinesis during mitosis. The CPC complex has essential functions at the centromere in ensuring correct chromosome alignment and segregation. In the complex, it may be required to direct the Aurora B/air-2 to centromeric DNA. The chain is Chromosome segregation and cytokinesis defective protein 1 (csc-1) from Caenorhabditis elegans.